The sequence spans 87 residues: uncharacterized protein (87 aa).

Residues 1-19 (MLVLLVAVLVTAVYAFVHA) form the signal peptide. A helical transmembrane segment spans residues 39–59 (LVILGAAVALASILYPVLGVL).

The protein to M.leprae ML2453.

It is found in the membrane. This is an uncharacterized protein from Mycobacterium bovis (strain ATCC BAA-935 / AF2122/97).